A 2998-amino-acid chain; its full sequence is Probable polyketide synthase 14 (2998 aa).

A Ketosynthase family 3 (KS3) domain is found at 19 to 456 (EDDIAIIGIG…GSNCCLILSE (438 aa)). Catalysis depends on for beta-ketoacyl synthase activity residues cysteine 189, histidine 331, and histidine 376. Residues 657–690 (GIEASFIVGHSLGEIPAAYCSGMITLDTLCYLIY) form an acyl/malonyl transferase region. Serine 667 serves as the catalytic For acyl/malonyl transferase activity. Residues 962–1084 (IDQLGFSLIE…GNFQLFTSGN (123 aa)) form an N-terminal hotdog fold region. The 288-residue stretch at 962 to 1249 (IDQLGFSLIE…CKSLTIIKDS (288 aa)) folds into the PKS/mFAS DH domain. Histidine 996 serves as the catalytic Proton acceptor; for dehydratase activity. The tract at residues 1101 to 1249 (NLTKLTKNEL…CKSLTIIKDS (149 aa)) is C-terminal hotdog fold. Catalysis depends on aspartate 1159, which acts as the Proton donor; for dehydratase activity. A helical membrane pass occupies residues 1979–1999 (SILIHSGSGGIGLSALNILKW). The 78-residue stretch at 2476-2553 (ENDTSIDSLF…SSIKLITNQL (78 aa)) folds into the Carrier domain. The residue at position 2513 (serine 2513) is an O-(pantetheine 4'-phosphoryl)serine. The tract at residues 2559–2578 (DGQQQQHRQNKKNNNIPENK) is disordered. Residues 2561 to 2573 (QQQQHRQNKKNNN) show a composition bias toward low complexity. Residues 2621 to 2641 (IFLTGSTGFLGAYLLWYLIQM) traverse the membrane as a helical segment.

Pantetheine 4'-phosphate serves as cofactor.

The protein resides in the membrane. Functionally, probable polyketide synthase. This chain is Probable polyketide synthase 14 (pks14), found in Dictyostelium discoideum (Social amoeba).